A 205-amino-acid polypeptide reads, in one-letter code: MSATPRPHDLVWLNHASALEDIAEPWVAQQWRAALPVVVRRDVDDQARVPVGVRGMKREQRAAGWVQARNIVRSVTPEMLVDREVLLHSPFVSQPPVQGAIALTLHRWPWGWGVTGSTGYALATEIPVLHAASDLDLLIRASQPLDREALLEWQTRVAQLPCRADTQVETPYGAFALNEWLRDGRALLKTSRGARLTATPWHREE.

Residues Asp134 and Asp136 contribute to the active site.

The protein belongs to the MdcG family.

It catalyses the reaction apo-[malonate decarboxylase ACP] + 2'-(5''-triphospho-alpha-D-ribosyl)-3'-dephospho-CoA = holo-[malonate decarboxylase ACP] + diphosphate. Its function is as follows. Transfers 2'-(5-triphosphoribosyl)-3'-dephosphocoenzyme-A to the apo-[acyl-carrier-protein] of the malonate decarboxylase to yield holo-[acyl-carrier-protein]. The protein is Phosphoribosyl-dephospho-CoA transferase of Klebsiella pneumoniae subsp. pneumoniae (strain ATCC 700721 / MGH 78578).